The chain runs to 245 residues: 1-(5-phosphoribosyl)-5-[(5-phosphoribosylamino)methylideneamino] imidazole-4-carboxamide isomerase (245 aa).

The active-site Proton acceptor is aspartate 8. Residue aspartate 131 is the Proton donor of the active site.

It belongs to the HisA/HisF family.

The protein localises to the cytoplasm. It carries out the reaction 1-(5-phospho-beta-D-ribosyl)-5-[(5-phospho-beta-D-ribosylamino)methylideneamino]imidazole-4-carboxamide = 5-[(5-phospho-1-deoxy-D-ribulos-1-ylimino)methylamino]-1-(5-phospho-beta-D-ribosyl)imidazole-4-carboxamide. Its pathway is amino-acid biosynthesis; L-histidine biosynthesis; L-histidine from 5-phospho-alpha-D-ribose 1-diphosphate: step 4/9. This Neisseria gonorrhoeae (strain NCCP11945) protein is 1-(5-phosphoribosyl)-5-[(5-phosphoribosylamino)methylideneamino] imidazole-4-carboxamide isomerase.